The chain runs to 720 residues: Inactive serine protease PAMR1 (720 aa).

The N-terminal stretch at M1 to S21 is a signal peptide. Cystine bridges form between C128-C150, C177-C199, C239-C250, C244-C260, C262-C271, C280-C329, C315-C342, and C414-C442. Positions C128–I236 constitute a CUB domain. The EGF-like domain maps to E235–E272. Sushi domains are found at residues R278–K344 and A387–P444. The region spanning I445–K720 is the Peptidase S1 domain. Residue N451 is glycosylated (N-linked (GlcNAc...) asparagine). 3 disulfide bridges follow: C489–C505, C630–C649, and C661–C697.

Belongs to the peptidase S1 family.

The protein resides in the secreted. May play a role in regeneration of skeletal muscle. The polypeptide is Inactive serine protease PAMR1 (PAMR1) (Bos taurus (Bovine)).